Here is a 311-residue protein sequence, read N- to C-terminus: MVSTATKIATFAFNNCLMNAAGVYCMTKEELLAIEASEAGSFVTKTGTLAPRQGNPEPRYADTALGSINSMGLPNHGYQYYLDIVTEMQKDQASKHHFLSVVGMSAEETETILKAIQASDYQGLVELNLSCPNVPGKPQLAYDFEATDQLLKKIFSYYTKPLGIKLPPYFDIVHFDQAAAIFNQYPLAFANCVNSIGNGLVIDDEQVVIKPKNGFGGIGGDYIKPTALANVHAFYQRLNSSIQIIGTGGVKTGRDAFEHILCGAAMVQIGTALHQEGPAIFKRITKELQDIMAEKGYQTLDDFRGQLQYKP.

Substrate contacts are provided by residues lysine 45, 69-73, and asparagine 128; that span reads NSMGL. Position 45–46 (45–46) interacts with FMN; the sequence is KT. Asparagine 128 provides a ligand contact to FMN. The active-site Nucleophile is cysteine 131. FMN contacts are provided by lysine 165 and valine 193. Substrate is bound at residue 194–195; it reads NS. FMN is bound by residues glycine 220, 248 to 249, and 270 to 271; these read GG and GT.

This sequence belongs to the dihydroorotate dehydrogenase family. Type 1 subfamily. Homodimer. FMN serves as cofactor.

It is found in the cytoplasm. The enzyme catalyses (S)-dihydroorotate + fumarate = orotate + succinate. Its pathway is pyrimidine metabolism; UMP biosynthesis via de novo pathway. Functionally, catalyzes the conversion of dihydroorotate to orotate with fumarate as the electron acceptor. The chain is Putative dihydroorotate dehydrogenase A (fumarate) (pyrD) from Streptococcus equi subsp. equi (strain 4047).